We begin with the raw amino-acid sequence, 259 residues long: Deoxyribose-phosphate aldolase (259 aa).

The active-site Proton donor/acceptor is the D102. K167 (schiff-base intermediate with acetaldehyde) is an active-site residue. Catalysis depends on K201, which acts as the Proton donor/acceptor.

The protein belongs to the DeoC/FbaB aldolase family. DeoC type 2 subfamily.

It localises to the cytoplasm. The enzyme catalyses 2-deoxy-D-ribose 5-phosphate = D-glyceraldehyde 3-phosphate + acetaldehyde. The protein operates within carbohydrate degradation; 2-deoxy-D-ribose 1-phosphate degradation; D-glyceraldehyde 3-phosphate and acetaldehyde from 2-deoxy-alpha-D-ribose 1-phosphate: step 2/2. Catalyzes a reversible aldol reaction between acetaldehyde and D-glyceraldehyde 3-phosphate to generate 2-deoxy-D-ribose 5-phosphate. The chain is Deoxyribose-phosphate aldolase from Shigella boydii serotype 4 (strain Sb227).